Here is a 125-residue protein sequence, read N- to C-terminus: Ribosome-binding factor A (125 aa).

The protein belongs to the RbfA family. In terms of assembly, monomer. Binds 30S ribosomal subunits, but not 50S ribosomal subunits or 70S ribosomes.

It localises to the cytoplasm. Its function is as follows. One of several proteins that assist in the late maturation steps of the functional core of the 30S ribosomal subunit. Associates with free 30S ribosomal subunits (but not with 30S subunits that are part of 70S ribosomes or polysomes). Required for efficient processing of 16S rRNA. May interact with the 5'-terminal helix region of 16S rRNA. This Paracidovorax citrulli (strain AAC00-1) (Acidovorax citrulli) protein is Ribosome-binding factor A.